Consider the following 335-residue polypeptide: GTPase Obg (335 aa).

The 159-residue stretch at 1-159 (MQFIDRSEIE…RKLLLELKLL (159 aa)) folds into the Obg domain. The 169-residue stretch at 160-328 (AEVGIIGLPN…LLARVWQVLE (169 aa)) folds into the OBG-type G domain. GTP is bound by residues 166-173 (GLPNAGKS), 191-195 (FTTLV), 213-216 (DIPG), 280-283 (NKAD), and 309-311 (SAA). 2 residues coordinate Mg(2+): Ser-173 and Thr-193.

This sequence belongs to the TRAFAC class OBG-HflX-like GTPase superfamily. OBG GTPase family. In terms of assembly, monomer. Requires Mg(2+) as cofactor.

Its subcellular location is the cytoplasm. Its function is as follows. An essential GTPase which binds GTP, GDP and possibly (p)ppGpp with moderate affinity, with high nucleotide exchange rates and a fairly low GTP hydrolysis rate. Plays a role in control of the cell cycle, stress response, ribosome biogenesis and in those bacteria that undergo differentiation, in morphogenesis control. The polypeptide is GTPase Obg (Gloeobacter violaceus (strain ATCC 29082 / PCC 7421)).